We begin with the raw amino-acid sequence, 464 residues long: Soluble pyridine nucleotide transhydrogenase (464 aa).

35-44 (DSRRVVGGNC) provides a ligand contact to FAD.

This sequence belongs to the class-I pyridine nucleotide-disulfide oxidoreductase family. Requires FAD as cofactor.

The protein resides in the cytoplasm. It carries out the reaction NAD(+) + NADPH = NADH + NADP(+). Its function is as follows. Conversion of NADPH, generated by peripheral catabolic pathways, to NADH, which can enter the respiratory chain for energy generation. This Pseudomonas aeruginosa (strain LESB58) protein is Soluble pyridine nucleotide transhydrogenase.